A 325-amino-acid polypeptide reads, in one-letter code: tRNA N6-adenosine threonylcarbamoyltransferase (325 aa).

His-110 and His-114 together coordinate Fe cation. Substrate contacts are provided by residues 133 to 137 (MVSGG), Asp-165, Gly-178, and Asn-268. A Fe cation-binding site is contributed by Asp-296.

The protein belongs to the KAE1 / TsaD family. It depends on Fe(2+) as a cofactor.

It is found in the cytoplasm. The enzyme catalyses L-threonylcarbamoyladenylate + adenosine(37) in tRNA = N(6)-L-threonylcarbamoyladenosine(37) in tRNA + AMP + H(+). Functionally, required for the formation of a threonylcarbamoyl group on adenosine at position 37 (t(6)A37) in tRNAs that read codons beginning with adenine. Is involved in the transfer of the threonylcarbamoyl moiety of threonylcarbamoyl-AMP (TC-AMP) to the N6 group of A37, together with TsaE and TsaB. TsaD likely plays a direct catalytic role in this reaction. The chain is tRNA N6-adenosine threonylcarbamoyltransferase from Thermosipho melanesiensis (strain DSM 12029 / CIP 104789 / BI429).